The chain runs to 129 residues: Small ribosomal subunit protein uS11 (129 aa).

Belongs to the universal ribosomal protein uS11 family. Part of the 30S ribosomal subunit. Interacts with proteins S7 and S18. Binds to IF-3.

Functionally, located on the platform of the 30S subunit, it bridges several disparate RNA helices of the 16S rRNA. Forms part of the Shine-Dalgarno cleft in the 70S ribosome. In Rhizorhabdus wittichii (strain DSM 6014 / CCUG 31198 / JCM 15750 / NBRC 105917 / EY 4224 / RW1) (Sphingomonas wittichii), this protein is Small ribosomal subunit protein uS11.